Reading from the N-terminus, the 219-residue chain is HTH-type transcriptional activator FasR (219 aa).

Residues Met1–Glu30 form a disordered region. Residues Asp29–Leu89 enclose the HTH tetR-type domain. The segment at residues Gly52–Phe71 is a DNA-binding region (H-T-H motif).

Homodimer.

FasR:DNA binding is regulated by long-chain acyl-CoAs (C14- to C26-CoA), which act as effector molecules that modulate the affinity of FasR for its DNA binding sequences and therefore modulate the expression of the essential fas-acpS operon. Functionally, transcriptional activator that plays a central role in sensing mycobacterial long-chain fatty acids and regulating lipid biosynthesis. Activates the expression of the genes encoding the fatty acid synthase (fas) and the 4-phosphopantetheinyl transferase (acpS), whose products are involved in the fatty acid and mycolic acid biosynthesis. Specifically binds to three conserved operator sequences present in the fas-acpS promoter region. Essential for M.smegmatis viability. The protein is HTH-type transcriptional activator FasR of Mycolicibacterium smegmatis (strain ATCC 700084 / mc(2)155) (Mycobacterium smegmatis).